The primary structure comprises 99 residues: Plastocyanin (99 aa).

The Plastocyanin-like domain occupies 1-99 (IEVLLGGGDG…AGMVGKVTVN (99 aa)). Residues histidine 37, cysteine 84, histidine 87, and methionine 92 each contribute to the Cu cation site.

The protein belongs to the plastocyanin family. The cofactor is Cu(2+).

The protein resides in the plastid. Its subcellular location is the chloroplast thylakoid membrane. In terms of biological role, participates in electron transfer between P700 and the cytochrome b6-f complex in photosystem I. In Capsella bursa-pastoris (Shepherd's purse), this protein is Plastocyanin (PETE).